We begin with the raw amino-acid sequence, 603 residues long: Geraniol synthase Tps-5073G30, chloroplastic (603 aa).

The transit peptide at 1 to 35 (MCSISQKVVIGLNKAAANNNLQNLDRRGFKTRCVS) directs the protein to the chloroplast. Arg-319, Asp-356, Asp-360, Arg-497, and Asp-500 together coordinate (2E)-geranyl diphosphate. Residues Asp-356 and Asp-360 each contribute to the Mg(2+) site. Positions 356–360 (DDVYD) match the DDXXD motif motif. Positions 500, 504, and 508 each coordinate Mg(2+).

It belongs to the terpene synthase family. Tpsb subfamily. As to quaternary structure, monomer. It depends on Mg(2+) as a cofactor. The cofactor is Mn(2+).

It is found in the plastid. It localises to the chloroplast. It catalyses the reaction (2E)-geranyl diphosphate + H2O = (2E)-geraniol + diphosphate. The protein operates within secondary metabolite biosynthesis; terpenoid biosynthesis. Its function is as follows. Monoterpene synthase (mono-TPS) involved in the biosynthesis of monoterpenes natural products. Catalyzes the conversion of (2E)-geranyl diphosphate (GPP) into geraniol. The protein is Geraniol synthase Tps-5073G30, chloroplastic of Perilla frutescens (Beefsteak mint).